We begin with the raw amino-acid sequence, 73 residues long: Large ribosomal subunit protein bL28 (73 aa).

This sequence belongs to the bacterial ribosomal protein bL28 family.

This chain is Large ribosomal subunit protein bL28, found in Fervidobacterium nodosum (strain ATCC 35602 / DSM 5306 / Rt17-B1).